The chain runs to 181 residues: ATP synthase subunit b, chloroplastic (181 aa).

The chain crosses the membrane as a helical span at residues 31 to 50 (NVLNIAILLSGVVYLGRNFL).

The protein belongs to the ATPase B chain family. As to quaternary structure, F-type ATPases have 2 components, F(1) - the catalytic core - and F(0) - the membrane proton channel. F(1) has five subunits: alpha(3), beta(3), gamma(1), delta(1), epsilon(1). F(0) has four main subunits: a(1), b(1), b'(1) and c(10-14). The alpha and beta chains form an alternating ring which encloses part of the gamma chain. F(1) is attached to F(0) by a central stalk formed by the gamma and epsilon chains, while a peripheral stalk is formed by the delta, b and b' chains.

The protein resides in the plastid. It localises to the chloroplast thylakoid membrane. In terms of biological role, f(1)F(0) ATP synthase produces ATP from ADP in the presence of a proton or sodium gradient. F-type ATPases consist of two structural domains, F(1) containing the extramembraneous catalytic core and F(0) containing the membrane proton channel, linked together by a central stalk and a peripheral stalk. During catalysis, ATP synthesis in the catalytic domain of F(1) is coupled via a rotary mechanism of the central stalk subunits to proton translocation. Component of the F(0) channel, it forms part of the peripheral stalk, linking F(1) to F(0). The sequence is that of ATP synthase subunit b, chloroplastic from Rhodomonas salina (Cryptomonas salina).